We begin with the raw amino-acid sequence, 141 residues long: MAVERTLSIIKPDAVQKNAIGAILGRFEKAGLRIAAAKMLHLSRDDAGGFYAVHQARPFYGELCDFMSSGPVLVTVLEGEGAIAKNRDLMGATNPKDAAAGTIRADFADSIDANAVHGSDSAETAAWEISYFFGQREIFAH.

ATP contacts are provided by Lys-11, Phe-59, Arg-87, Thr-93, Arg-104, and Asn-114. Residue His-117 is the Pros-phosphohistidine intermediate of the active site.

It belongs to the NDK family. Homotetramer. It depends on Mg(2+) as a cofactor.

It localises to the cytoplasm. The enzyme catalyses a 2'-deoxyribonucleoside 5'-diphosphate + ATP = a 2'-deoxyribonucleoside 5'-triphosphate + ADP. It catalyses the reaction a ribonucleoside 5'-diphosphate + ATP = a ribonucleoside 5'-triphosphate + ADP. Functionally, major role in the synthesis of nucleoside triphosphates other than ATP. The ATP gamma phosphate is transferred to the NDP beta phosphate via a ping-pong mechanism, using a phosphorylated active-site intermediate. The polypeptide is Nucleoside diphosphate kinase (Acidithiobacillus ferrooxidans (strain ATCC 53993 / BNL-5-31) (Leptospirillum ferrooxidans (ATCC 53993))).